Reading from the N-terminus, the 163-residue chain is Crossover junction endodeoxyribonuclease RuvC (163 aa).

Catalysis depends on residues D9, E76, and D148. Residues D9, E76, and D148 each contribute to the Mg(2+) site.

Belongs to the RuvC family. As to quaternary structure, homodimer which binds Holliday junction (HJ) DNA. The HJ becomes 2-fold symmetrical on binding to RuvC with unstacked arms; it has a different conformation from HJ DNA in complex with RuvA. In the full resolvosome a probable DNA-RuvA(4)-RuvB(12)-RuvC(2) complex forms which resolves the HJ. Mg(2+) serves as cofactor.

It is found in the cytoplasm. The catalysed reaction is Endonucleolytic cleavage at a junction such as a reciprocal single-stranded crossover between two homologous DNA duplexes (Holliday junction).. In terms of biological role, the RuvA-RuvB-RuvC complex processes Holliday junction (HJ) DNA during genetic recombination and DNA repair. Endonuclease that resolves HJ intermediates. Cleaves cruciform DNA by making single-stranded nicks across the HJ at symmetrical positions within the homologous arms, yielding a 5'-phosphate and a 3'-hydroxyl group; requires a central core of homology in the junction. The consensus cleavage sequence is 5'-(A/T)TT(C/G)-3'. Cleavage occurs on the 3'-side of the TT dinucleotide at the point of strand exchange. HJ branch migration catalyzed by RuvA-RuvB allows RuvC to scan DNA until it finds its consensus sequence, where it cleaves and resolves the cruciform DNA. In Nostoc punctiforme (strain ATCC 29133 / PCC 73102), this protein is Crossover junction endodeoxyribonuclease RuvC.